A 276-amino-acid polypeptide reads, in one-letter code: MLIHPQINPVALQLGPLAIHWYGLTYLAAFGLFFFLATRRLRHEPYASITGPGAWSRKDIEDILFLGVMGVVIGGRLGYCLFYKPGYYLAHPLEILAVWQGGMSFHGGMLGVLASQFWFARTRQRPWLQVMDFVAPCVPTGLAAGRMGNFINGELWGRFSSPDLPWGMVFRNSGSMLPRHPSQVYQFLLEGLLLFVLLWLYARKPRKMGQVSGAFLVGYGVFRFIAEYFREPDDFLGILALGLSMGQWLCVPMIVGGAGLWWWASQRAASAPAARA.

Helical transmembrane passes span 17–37 (LAIH…FFLA), 63–83 (ILFL…CLFY), and 95–115 (ILAV…VLAS). Arg146 serves as a coordination point for a 1,2-diacyl-sn-glycero-3-phospho-(1'-sn-glycerol). A run of 3 helical transmembrane segments spans residues 182–202 (SQVY…WLYA), 209–229 (GQVS…AEYF), and 235–255 (FLGI…PMIV).

The protein belongs to the Lgt family.

It is found in the cell inner membrane. It catalyses the reaction L-cysteinyl-[prolipoprotein] + a 1,2-diacyl-sn-glycero-3-phospho-(1'-sn-glycerol) = an S-1,2-diacyl-sn-glyceryl-L-cysteinyl-[prolipoprotein] + sn-glycerol 1-phosphate + H(+). It functions in the pathway protein modification; lipoprotein biosynthesis (diacylglyceryl transfer). Its function is as follows. Catalyzes the transfer of the diacylglyceryl group from phosphatidylglycerol to the sulfhydryl group of the N-terminal cysteine of a prolipoprotein, the first step in the formation of mature lipoproteins. The protein is Phosphatidylglycerol--prolipoprotein diacylglyceryl transferase of Polaromonas sp. (strain JS666 / ATCC BAA-500).